The primary structure comprises 953 residues: Lysosomal alpha-glucosidase (953 aa).

The signal sequence occupies residues methionine 1 to leucine 27. A propeptide spanning residues glycine 28–glutamine 69 is cleaved from the precursor. The P-type domain maps to threonine 80–proline 131. 3 disulfide bridges follow: cysteine 82/cysteine 109, cysteine 92/cysteine 108, and cysteine 103/cysteine 127. N-linked (GlcNAc...) asparagine glycosylation is found at asparagine 140, asparagine 233, and asparagine 390. Aspartate 404 is a substrate binding site. Asparagine 470 carries an N-linked (GlcNAc...) asparagine glycan. Aspartate 518 functions as the Nucleophile in the catalytic mechanism. The active site involves glutamate 521. Residues cysteine 533 and cysteine 558 are joined by a disulfide bond. Substrate is bound by residues arginine 600 and aspartate 616. A disulfide bond links cysteine 647 and cysteine 658. N-linked (GlcNAc...) asparagine glycosylation is present at asparagine 652. Residue histidine 674 coordinates substrate. N-linked (GlcNAc...) asparagine glycans are attached at residues asparagine 883 and asparagine 926.

This sequence belongs to the glycosyl hydrolase 31 family.

Its subcellular location is the lysosome. It localises to the lysosome membrane. It carries out the reaction Hydrolysis of terminal, non-reducing (1-&gt;4)-linked alpha-D-glucose residues with release of alpha-D-glucose.. In terms of biological role, essential for the degradation of glycogen in lysosomes. Has highest activity on alpha-1,4-linked glycosidic linkages, but can also hydrolyze alpha-1,6-linked glucans. This is Lysosomal alpha-glucosidase (Gaa) from Rattus norvegicus (Rat).